A 556-amino-acid polypeptide reads, in one-letter code: Arginine--tRNA ligase (556 aa).

Residues 132-142 (ANPTGSLHLGH) carry the 'HIGH' region motif.

This sequence belongs to the class-I aminoacyl-tRNA synthetase family. As to quaternary structure, monomer.

The protein resides in the cytoplasm. It catalyses the reaction tRNA(Arg) + L-arginine + ATP = L-arginyl-tRNA(Arg) + AMP + diphosphate. The protein is Arginine--tRNA ligase of Anoxybacillus flavithermus (strain DSM 21510 / WK1).